The primary structure comprises 546 residues: Chaperonin GroEL (546 aa).

ATP-binding positions include 30 to 33 (TLGP), Lys-51, 87 to 91 (DGTTT), Gly-415, 479 to 481 (NAA), and Asp-495.

The protein belongs to the chaperonin (HSP60) family. As to quaternary structure, forms a cylinder of 14 subunits composed of two heptameric rings stacked back-to-back. Interacts with the co-chaperonin GroES.

The protein localises to the cytoplasm. The catalysed reaction is ATP + H2O + a folded polypeptide = ADP + phosphate + an unfolded polypeptide.. Together with its co-chaperonin GroES, plays an essential role in assisting protein folding. The GroEL-GroES system forms a nano-cage that allows encapsulation of the non-native substrate proteins and provides a physical environment optimized to promote and accelerate protein folding. This chain is Chaperonin GroEL, found in Pseudomonas putida (strain ATCC 700007 / DSM 6899 / JCM 31910 / BCRC 17059 / LMG 24140 / F1).